Reading from the N-terminus, the 722-residue chain is Host cell factor 2 (722 aa).

Kelch repeat units lie at residues 34–79 (LMII…GFVC), 83–130 (RILV…RLGH), 207–255 (KMYV…VIGN), and 257–303 (MYIF…VSDS). Fibronectin type-III domains are found at residues 359–460 (APSQ…VDSS), 514–604 (TPSN…TCTP), and 606–716 (FPGA…DQEK). The disordered stretch occupies residues 398-476 (ATSSDSSAAP…LAPNTSNNSS (79 aa)). Polar residues predominate over residues 419–436 (QGSNSTLHNSVSDTVNST).

As to quaternary structure, binds KMT2A/MLL1. Component of the MLL1/MLL complex, at least composed of KMT2A/MLL1, ASH2L, RBBP5, DPY30, WDR5, MEN1, HCFC1 and HCFC2. Interacts with TASOR. In terms of tissue distribution, expressed in the spermatogonia, spermatocytes and ovary.

The protein localises to the cytoplasm. It localises to the nucleus. This is Host cell factor 2 (Hcfc2) from Mus musculus (Mouse).